Here is a 172-residue protein sequence, read N- to C-terminus: Small ribosomal subunit protein uS5 (172 aa).

Residues 15-78 (YIEKLVNIRR…DKARKRMKSV (64 aa)) enclose the S5 DRBM domain.

It belongs to the universal ribosomal protein uS5 family. As to quaternary structure, part of the 30S ribosomal subunit. Contacts proteins S4 and S8.

Functionally, with S4 and S12 plays an important role in translational accuracy. Located at the back of the 30S subunit body where it stabilizes the conformation of the head with respect to the body. The protein is Small ribosomal subunit protein uS5 of Ruthia magnifica subsp. Calyptogena magnifica.